Here is a 297-residue protein sequence, read N- to C-terminus: N-acetylneuraminate lyase (297 aa).

The aceneuramate site is built by serine 47 and threonine 48. Catalysis depends on tyrosine 137, which acts as the Proton donor. The Schiff-base intermediate with substrate role is filled by lysine 165. Aceneuramate-binding residues include threonine 167, glycine 189, aspartate 191, glutamate 192, and serine 208.

Belongs to the DapA family. NanA subfamily. Homotetramer.

It is found in the cytoplasm. The enzyme catalyses aceneuramate = aldehydo-N-acetyl-D-mannosamine + pyruvate. Its pathway is amino-sugar metabolism; N-acetylneuraminate degradation; D-fructose 6-phosphate from N-acetylneuraminate: step 1/5. Catalyzes the reversible aldol cleavage of N-acetylneuraminic acid (sialic acid; Neu5Ac) to form pyruvate and N-acetylmannosamine (ManNAc) via a Schiff base intermediate. In Salmonella agona (strain SL483), this protein is N-acetylneuraminate lyase.